A 362-amino-acid chain; its full sequence is Phospho-N-acetylmuramoyl-pentapeptide-transferase (362 aa).

10 helical membrane-spanning segments follow: residues 21–41, 75–95, 100–120, 136–156, 170–190, 201–221, 225–245, 247–267, 290–310, and 339–359; these read YITF…FLLG, TMGG…WADL, VWAV…DDFL, LVVQ…LMPG, LMIP…MGAS, GLAI…AYLV, IFSH…AVFC, ALIG…AVFM, IVLA…IVQV, and TVVI…LATL.

This sequence belongs to the glycosyltransferase 4 family. MraY subfamily. The cofactor is Mg(2+).

The protein localises to the cell inner membrane. It carries out the reaction UDP-N-acetyl-alpha-D-muramoyl-L-alanyl-gamma-D-glutamyl-meso-2,6-diaminopimeloyl-D-alanyl-D-alanine + di-trans,octa-cis-undecaprenyl phosphate = di-trans,octa-cis-undecaprenyl diphospho-N-acetyl-alpha-D-muramoyl-L-alanyl-D-glutamyl-meso-2,6-diaminopimeloyl-D-alanyl-D-alanine + UMP. It functions in the pathway cell wall biogenesis; peptidoglycan biosynthesis. Catalyzes the initial step of the lipid cycle reactions in the biosynthesis of the cell wall peptidoglycan: transfers peptidoglycan precursor phospho-MurNAc-pentapeptide from UDP-MurNAc-pentapeptide onto the lipid carrier undecaprenyl phosphate, yielding undecaprenyl-pyrophosphoryl-MurNAc-pentapeptide, known as lipid I. This chain is Phospho-N-acetylmuramoyl-pentapeptide-transferase, found in Acidiphilium cryptum (strain JF-5).